The sequence spans 171 residues: S-ribosylhomocysteine lyase (171 aa).

The Fe cation site is built by histidine 54, histidine 58, and cysteine 128.

The protein belongs to the LuxS family. As to quaternary structure, homodimer. The cofactor is Fe cation.

It catalyses the reaction S-(5-deoxy-D-ribos-5-yl)-L-homocysteine = (S)-4,5-dihydroxypentane-2,3-dione + L-homocysteine. Functionally, involved in the synthesis of autoinducer 2 (AI-2) which is secreted by bacteria and is used to communicate both the cell density and the metabolic potential of the environment. The regulation of gene expression in response to changes in cell density is called quorum sensing. Catalyzes the transformation of S-ribosylhomocysteine (RHC) to homocysteine (HC) and 4,5-dihydroxy-2,3-pentadione (DPD). The chain is S-ribosylhomocysteine lyase from Edwardsiella ictaluri (strain 93-146).